The sequence spans 148 residues: WAP four-disulfide core domain protein 6B (148 aa).

A signal peptide spans 1–35; sequence MPPNRLLLPKMRLWGLLPFLVPFILLWSIQEPALA. The region spanning 37-84 is the WAP domain; it reads GVFIRTCPKYNKIKCDFEERNQCLRHRECPGEERCCLFACGRKCLDLS. Disulfide bonds link Cys43–Cys72, Cys51–Cys76, Cys59–Cys71, Cys65–Cys80, Cys88–Cys138, Cys97–Cys121, and Cys113–Cys134. A BPTI/Kunitz inhibitor domain is found at 88-138; the sequence is CSLPQDAGPCLAYLPRWWYNQDTKLCIEFIYGGCQGNPNNFESKAVCTSIC.

It localises to the secreted. This Mus musculus (Mouse) protein is WAP four-disulfide core domain protein 6B (Wfdc6b).